Consider the following 321-residue polypeptide: AA9 family lytic polysaccharide monooxygenase A (321 aa).

A signal peptide spans Met-1–Gly-21. His-20 contacts Cu(2+). Residues Cys-71 and Cys-197 are joined by a disulfide bond. The N-linked (GlcNAc...) asparagine glycan is linked to Asn-72. His-105 provides a ligand contact to Cu(2+). N-linked (GlcNAc...) asparagine glycosylation occurs at Asn-157. Positions 183 and 192 each coordinate O2. Tyr-194 is a binding site for Cu(2+). Residues Ser-278–Ala-306 are disordered. Residue Ser-293 is the site of GPI-anchor amidated serine attachment. Positions Ser-294–Ala-321 are cleaved as a propeptide — removed in mature form.

The protein belongs to the polysaccharide monooxygenase AA9 family. Cu(2+) is required as a cofactor.

The protein resides in the cell membrane. The enzyme catalyses [(1-&gt;4)-beta-D-glucosyl]n+m + reduced acceptor + O2 = 4-dehydro-beta-D-glucosyl-[(1-&gt;4)-beta-D-glucosyl]n-1 + [(1-&gt;4)-beta-D-glucosyl]m + acceptor + H2O.. In terms of biological role, lytic polysaccharide monooxygenase (LPMO) that depolymerizes crystalline and amorphous polysaccharides via the oxidation of scissile alpha- or beta-(1-4)-glycosidic bonds, yielding C1 or C4 oxidation products. Catalysis by LPMOs requires the reduction of the active-site copper from Cu(II) to Cu(I) by a reducing agent and H(2)O(2) or O(2) as a cosubstrate. Has broad specificity, cleaving at any position along the beta-glucan backbone of xyloglucan, regardless of substitutions. Shows minor activity on glucomannan. The sequence is that of AA9 family lytic polysaccharide monooxygenase A from Gloeophyllum trabeum (strain ATCC 11539 / FP-39264 / Madison 617) (Brown rot fungus).